We begin with the raw amino-acid sequence, 351 residues long: 4-hydroxy-3-methylbut-2-enyl diphosphate reductase (351 aa).

Cysteine 18 contributes to the [4Fe-4S] cluster binding site. (2E)-4-hydroxy-3-methylbut-2-enyl diphosphate is bound by residues histidine 47 and histidine 83. Positions 47 and 83 each coordinate dimethylallyl diphosphate. Isopentenyl diphosphate contacts are provided by histidine 47 and histidine 83. Cysteine 105 is a [4Fe-4S] cluster binding site. Histidine 133 is a binding site for (2E)-4-hydroxy-3-methylbut-2-enyl diphosphate. Histidine 133 contacts dimethylallyl diphosphate. Residue histidine 133 participates in isopentenyl diphosphate binding. Glutamate 135 functions as the Proton donor in the catalytic mechanism. Position 174 (threonine 174) interacts with (2E)-4-hydroxy-3-methylbut-2-enyl diphosphate. Cysteine 204 is a binding site for [4Fe-4S] cluster. Positions 232, 233, 234, and 277 each coordinate (2E)-4-hydroxy-3-methylbut-2-enyl diphosphate. Residues serine 232, serine 233, asparagine 234, and serine 277 each coordinate dimethylallyl diphosphate. Positions 232, 233, 234, and 277 each coordinate isopentenyl diphosphate.

This sequence belongs to the IspH family. Requires [4Fe-4S] cluster as cofactor.

It catalyses the reaction isopentenyl diphosphate + 2 oxidized [2Fe-2S]-[ferredoxin] + H2O = (2E)-4-hydroxy-3-methylbut-2-enyl diphosphate + 2 reduced [2Fe-2S]-[ferredoxin] + 2 H(+). It carries out the reaction dimethylallyl diphosphate + 2 oxidized [2Fe-2S]-[ferredoxin] + H2O = (2E)-4-hydroxy-3-methylbut-2-enyl diphosphate + 2 reduced [2Fe-2S]-[ferredoxin] + 2 H(+). The protein operates within isoprenoid biosynthesis; dimethylallyl diphosphate biosynthesis; dimethylallyl diphosphate from (2E)-4-hydroxy-3-methylbutenyl diphosphate: step 1/1. It functions in the pathway isoprenoid biosynthesis; isopentenyl diphosphate biosynthesis via DXP pathway; isopentenyl diphosphate from 1-deoxy-D-xylulose 5-phosphate: step 6/6. In terms of biological role, catalyzes the conversion of 1-hydroxy-2-methyl-2-(E)-butenyl 4-diphosphate (HMBPP) into a mixture of isopentenyl diphosphate (IPP) and dimethylallyl diphosphate (DMAPP). Acts in the terminal step of the DOXP/MEP pathway for isoprenoid precursor biosynthesis. In Bartonella tribocorum (strain CIP 105476 / IBS 506), this protein is 4-hydroxy-3-methylbut-2-enyl diphosphate reductase.